The chain runs to 301 residues: Nucleotide-binding protein Noca_2527 (301 aa).

Residue 26–33 participates in ATP binding; the sequence is GMTGAGRS. GTP is bound at residue 77-80; it reads DVRS.

Belongs to the RapZ-like family.

Functionally, displays ATPase and GTPase activities. The sequence is that of Nucleotide-binding protein Noca_2527 from Nocardioides sp. (strain ATCC BAA-499 / JS614).